The sequence spans 397 residues: Teichoic acid D-alanine hydrolase (397 aa).

The first 23 residues, Met1–Ala23, serve as a signal peptide directing secretion.

Its subcellular location is the cell membrane. It carries out the reaction [(4-D-Ala)-(2-GlcNAc)-Rib-ol-P]n-[Gro-P]m-beta-D-ManNAc-(1-&gt;4)-alpha-D-GlcNAc-P-peptidoglycan + n H2O = [(2-GlcNAc)-Rib-ol-P]n-[Gro-P]m-beta-D-ManNAc-(1-&gt;4)-alpha-D-GlcNAc-P-peptidoglycan + n D-alanine.. Its function is as follows. Catalyzes the liberation of D-alanyl moieties present on wall teichoic acid (WTA) and lipoteichoic acid (LTA). Affects the methicillin resistance level and autolysis in the presence of Triton X-100 as well as the cell wall structure. The chain is Teichoic acid D-alanine hydrolase (fmtA) from Staphylococcus aureus (strain NCTC 8325 / PS 47).